The primary structure comprises 148 residues: Large ribosomal subunit protein bL9 (148 aa).

Belongs to the bacterial ribosomal protein bL9 family.

In terms of biological role, binds to the 23S rRNA. In Thermus thermophilus, this protein is Large ribosomal subunit protein bL9.